We begin with the raw amino-acid sequence, 228 residues long: Adapter protein MecA (228 aa).

The disordered stretch occupies residues Gly79–Gln98. The span at Ser85–Thr95 shows a compositional bias: acidic residues.

Belongs to the MecA family. As to quaternary structure, homodimer.

Functionally, enables the recognition and targeting of unfolded and aggregated proteins to the ClpC protease or to other proteins involved in proteolysis. In Lacticaseibacillus casei (strain BL23) (Lactobacillus casei), this protein is Adapter protein MecA.